The primary structure comprises 97 residues: Kininogen-1 (97 aa).

The N-terminal stretch at 1 to 23 (MRLWFCLSFLIILCVEHFPGTLA) is a signal peptide.

Belongs to the bradykinin-related peptide family. In terms of tissue distribution, expressed by the skin glands.

It is found in the secreted. Functionally, [Ala3,Thr6]bradykinin: produces in vitro relaxation of rat arterial smooth muscle and constriction of intestinal smooth muscle. Possesses insulin-releasing activity. May target bradykinin receptors (BDKRB). The sequence is that of Kininogen-1 from Bombina variegata (Yellow-bellied toad).